The sequence spans 122 residues: Large ribosomal subunit protein uL14 (122 aa).

This sequence belongs to the universal ribosomal protein uL14 family. As to quaternary structure, part of the 50S ribosomal subunit. Forms a cluster with proteins L3 and L19. In the 70S ribosome, L14 and L19 interact and together make contacts with the 16S rRNA in bridges B5 and B8.

Binds to 23S rRNA. Forms part of two intersubunit bridges in the 70S ribosome. The protein is Large ribosomal subunit protein uL14 of Rhodococcus erythropolis (strain PR4 / NBRC 100887).